We begin with the raw amino-acid sequence, 215 residues long: MSSAVIFVESATPGTLTEFKDLLAKQLLEVRETWSLEFRTYRTLVKDFPSREKLLYSLTFPHHDKKTVLIRNSLAWVLGTAEIPDNLQTCSTGLSESIDQLLASKLSNMWAQRQVIRGDAGQTLLITGDVTVRIINLFAATGFKGLLIELDNLQSATSLANITDLLNEMKVKVFKVASAPGLKSEDVEVVDSSSTMESGNEALFTLAKQYIEVLE.

The protein belongs to the Mediator complex subunit 20 family. Component of the Mediator complex.

The protein localises to the nucleus. In terms of biological role, component of the Mediator complex, a coactivator involved in the regulated transcription of nearly all RNA polymerase II-dependent genes. Mediator functions as a bridge to convey information from gene-specific regulatory proteins to the basal RNA polymerase II transcription machinery. Mediator is recruited to promoters by direct interactions with regulatory proteins and serves as a scaffold for the assembly of a functional preinitiation complex with RNA polymerase II and the general transcription factors. In Candida glabrata (strain ATCC 2001 / BCRC 20586 / JCM 3761 / NBRC 0622 / NRRL Y-65 / CBS 138) (Yeast), this protein is Mediator of RNA polymerase II transcription subunit 20 (SRB2).